The chain runs to 201 residues: 3-isopropylmalate dehydratase small subunit (201 aa).

It belongs to the LeuD family. LeuD type 1 subfamily. In terms of assembly, heterodimer of LeuC and LeuD.

The enzyme catalyses (2R,3S)-3-isopropylmalate = (2S)-2-isopropylmalate. It functions in the pathway amino-acid biosynthesis; L-leucine biosynthesis; L-leucine from 3-methyl-2-oxobutanoate: step 2/4. Functionally, catalyzes the isomerization between 2-isopropylmalate and 3-isopropylmalate, via the formation of 2-isopropylmaleate. In Allorhizobium ampelinum (strain ATCC BAA-846 / DSM 112012 / S4) (Agrobacterium vitis (strain S4)), this protein is 3-isopropylmalate dehydratase small subunit.